Reading from the N-terminus, the 147-residue chain is Ubiquitin-conjugating enzyme E2-17 kDa (147 aa).

The 147-residue stretch at 1–147 (MALKRINKEL…AREWTRKYAM (147 aa)) folds into the UBC core domain. The active-site Glycyl thioester intermediate is C85.

Belongs to the ubiquitin-conjugating enzyme family.

It carries out the reaction S-ubiquitinyl-[E1 ubiquitin-activating enzyme]-L-cysteine + [E2 ubiquitin-conjugating enzyme]-L-cysteine = [E1 ubiquitin-activating enzyme]-L-cysteine + S-ubiquitinyl-[E2 ubiquitin-conjugating enzyme]-L-cysteine.. The protein operates within protein modification; protein ubiquitination. In terms of biological role, catalyzes the covalent attachment of ubiquitin to other proteins. Mediates the selective degradation of short-lived and abnormal proteins. Required for proper telomere behavior during cell divisions and possibly for ubiquitination of proteins involved in postmeiotic stages of spermatogenesis. Deletion mutations are lethal in homozygotes. The polypeptide is Ubiquitin-conjugating enzyme E2-17 kDa (eff) (Drosophila melanogaster (Fruit fly)).